The chain runs to 153 residues: Large ribosomal subunit protein bL9 (153 aa).

This sequence belongs to the bacterial ribosomal protein bL9 family.

Functionally, binds to the 23S rRNA. In Gloeobacter violaceus (strain ATCC 29082 / PCC 7421), this protein is Large ribosomal subunit protein bL9.